The sequence spans 1381 residues: Hepatocyte growth factor receptor (1381 aa).

The first 24 residues, 1–24 (MKAPAVLAPGILMLLFTLVQRSNG), serve as a signal peptide directing secretion. The Extracellular segment spans residues 25–932 (ECKEALAKSE…VIVQPDQNFT (908 aa)). The 489-residue stretch at 27 to 515 (KEALAKSEMN…TGKKITKIPL (489 aa)) folds into the Sema domain. Asn-45 is a glycosylation site (N-linked (GlcNAc...) asparagine). Disulfide bonds link Cys-95/Cys-101, Cys-98/Cys-160, Cys-133/Cys-141, and Cys-172/Cys-175. Asn-106 carries N-linked (GlcNAc...) asparagine glycosylation. Asn-149 carries N-linked (GlcNAc...) asparagine glycosylation. N-linked (GlcNAc...) asparagine glycosylation occurs at Asn-202. 2 disulfides stabilise this stretch: Cys-298–Cys-363 and Cys-385–Cys-397. 2 N-linked (GlcNAc...) asparagine glycosylation sites follow: Asn-399 and Asn-405. 4 disulfides stabilise this stretch: Cys-520–Cys-538, Cys-526–Cys-561, Cys-529–Cys-545, and Cys-541–Cys-551. 3 IPT/TIG domains span residues 563–655 (PAIY…FSYV), 657–739 (PIIT…FSYR), and 742–836 (PIVY…LIYV). O-linked (Man) threonine glycosylation occurs at Thr-582. N-linked (GlcNAc...) asparagine glycosylation is found at Asn-607 and Asn-635. O-linked (Man) threonine glycans are attached at residues Thr-676 and Thr-761. Asn-785, Asn-879, and Asn-930 each carry an N-linked (GlcNAc...) asparagine glycan. Residues 933–955 (GLIAGVVSISIALLLLLGLFLWL) form a helical membrane-spanning segment. At 956 to 1381 (KKRKQIKDLG…EDNADDEVDT (426 aa)) the chain is on the cytoplasmic side. Ser-966 carries the phosphoserine modification. Position 977 is a phosphothreonine (Thr-977). A phosphoserine mark is found at Ser-990, Ser-997, and Ser-1000. At Tyr-1003 the chain carries Phosphotyrosine. The region spanning 1078 to 1345 (VHFNEVIGRG…RISAIFSTFI (268 aa)) is the Protein kinase domain. ATP is bound by residues 1084–1092 (IGRGHFGCV) and Lys-1110. The active-site Proton acceptor is the Asp-1204. Positions 1212–1381 (LDEKFTVKVA…EDNADDEVDT (170 aa)) are interaction with RANBP9. Residue Tyr-1230 is modified to Phosphotyrosine. A phosphotyrosine; by autocatalysis mark is found at Tyr-1234 and Tyr-1235. The residue at position 1289 (Thr-1289) is a Phosphothreonine. An interaction with MUC20 region spans residues 1320–1359 (WHPKAEMRPSFSELVSRISAIFSTFIGEHYVHVNATYVNV). Phosphotyrosine; by autocatalysis occurs at positions 1349 and 1356. Residue Tyr-1365 is modified to Phosphotyrosine.

Belongs to the protein kinase superfamily. Tyr protein kinase family. In terms of assembly, heterodimer made of an alpha chain (50 kDa) and a beta chain (145 kDa) which are disulfide linked. Binds PLXNB1. Interacts when phosphorylated with downstream effectors including STAT3, PIK3R1, SRC, PCLG1, GRB2 and GAB1. Interacts with SPSB1, SPSB2 and SPSB4. Interacts with INPP5D/SHIP1. When phosphorylated at Tyr-1356, interacts with INPPL1/SHIP2. Interacts with RANBP9 and RANBP10, as well as SPSB1, SPSB2, SPSB3 and SPSB4. SPSB1 binding occurs in the presence and in the absence of HGF, however HGF treatment has a positive effect on this interaction. Interacts with MUC20; prevents interaction with GRB2 and suppresses hepatocyte growth factor-induced cell proliferation. Interacts with GRB10. Interacts with PTPN1 and PTPN2. Interacts with HSP90AA1 and HSP90AB1; the interaction suppresses MET kinase activity. Interacts with tensin TNS3. Interacts (when phosphorylated) with tensin TNS4 (via SH2 domain); the interaction increases MET protein stability by inhibiting MET endocytosis and subsequent lysosomal degradation. (Microbial infection) Immunoprecipitates with L.monocytogenes InlB. InlB probably dimerizes upon binding to MET, which encourages subsequent dimerization of MET. Post-translationally, autophosphorylated in response to ligand binding on Tyr-1234 and Tyr-1235 in the kinase domain leading to further phosphorylation of Tyr-1349 and Tyr-1356 in the C-terminal multifunctional docking site. Dephosphorylated by PTPRJ at Tyr-1349 and Tyr-1365. Dephosphorylated by PTPN1 and PTPN2. Ubiquitinated. Ubiquitination by CBL regulates the receptor stability and activity through proteasomal degradation. In terms of processing, O-mannosylation of IPT/TIG domains by TMEM260 is required for protein maturation. O-mannosylated residues are composed of single mannose glycans that are not elongated or modified. Post-translationally, (Microbial infection) Tyrosine phosphorylation is stimulated by L.monocytogenes InlB.

The protein resides in the membrane. The enzyme catalyses L-tyrosyl-[protein] + ATP = O-phospho-L-tyrosyl-[protein] + ADP + H(+). In its inactive state, the C-terminal tail interacts with the catalytic domain and inhibits the kinase activity. Upon ligand binding, the C-terminal tail is displaced and becomes phosphorylated, thus increasing the kinase activity. Functionally, receptor tyrosine kinase that transduces signals from the extracellular matrix into the cytoplasm by binding to hepatocyte growth factor/HGF ligand. Regulates many physiological processes including proliferation, scattering, morphogenesis and survival. Ligand binding at the cell surface induces autophosphorylation of MET on its intracellular domain that provides docking sites for downstream signaling molecules. Following activation by ligand, interacts with the PI3-kinase subunit PIK3R1, PLCG1, SRC, GRB2, STAT3 or the adapter GAB1. Recruitment of these downstream effectors by MET leads to the activation of several signaling cascades including the RAS-ERK, PI3 kinase-AKT, or PLCgamma-PKC. The RAS-ERK activation is associated with the morphogenetic effects while PI3K/AKT coordinates prosurvival effects. During embryonic development, MET signaling plays a role in gastrulation, development and migration of muscles and neuronal precursors, angiogenesis and kidney formation. In adults, participates in wound healing as well as organ regeneration and tissue remodeling. Also promotes differentiation and proliferation of hematopoietic cells. In terms of biological role, (Microbial infection) Acts as a receptor for Listeria monocytogenes internalin InlB, mediating entry of the pathogen into cells. The polypeptide is Hepatocyte growth factor receptor (MET) (Chlorocebus aethiops (Green monkey)).